The sequence spans 236 residues: UPF0257 lipoprotein YnfC (236 aa).

A signal peptide spans 1 to 16; it reads MKYKLLPCLLAIFLTG. Cys-17 carries the N-palmitoyl cysteine lipid modification. Residue Cys-17 is the site of S-diacylglycerol cysteine attachment.

The protein belongs to the UPF0257 family.

Its subcellular location is the cell membrane. The chain is UPF0257 lipoprotein YnfC (ynfC) from Shigella flexneri.